The following is a 122-amino-acid chain: Small ribosomal subunit protein uS13 (122 aa).

The disordered stretch occupies residues 97 to 122 (PVRGQRTHTNARTRKGPAKAIAGKKK).

The protein belongs to the universal ribosomal protein uS13 family. In terms of assembly, part of the 30S ribosomal subunit. Forms a loose heterodimer with protein S19. Forms two bridges to the 50S subunit in the 70S ribosome.

Functionally, located at the top of the head of the 30S subunit, it contacts several helices of the 16S rRNA. In the 70S ribosome it contacts the 23S rRNA (bridge B1a) and protein L5 of the 50S subunit (bridge B1b), connecting the 2 subunits; these bridges are implicated in subunit movement. Contacts the tRNAs in the A and P-sites. This Bartonella quintana (strain Toulouse) (Rochalimaea quintana) protein is Small ribosomal subunit protein uS13.